Consider the following 322-residue polypeptide: 4-hydroxy-3-methylbut-2-enyl diphosphate reductase (322 aa).

Residue Cys-12 participates in [4Fe-4S] cluster binding. His-43 and His-81 together coordinate (2E)-4-hydroxy-3-methylbut-2-enyl diphosphate. Residues His-43 and His-81 each coordinate dimethylallyl diphosphate. Isopentenyl diphosphate is bound by residues His-43 and His-81. [4Fe-4S] cluster is bound at residue Cys-103. His-131 lines the (2E)-4-hydroxy-3-methylbut-2-enyl diphosphate pocket. His-131 is a binding site for dimethylallyl diphosphate. Position 131 (His-131) interacts with isopentenyl diphosphate. Catalysis depends on Glu-133, which acts as the Proton donor. Thr-172 is a (2E)-4-hydroxy-3-methylbut-2-enyl diphosphate binding site. Cys-200 is a binding site for [4Fe-4S] cluster. Residues Ser-228, Asn-230, and Ser-273 each coordinate (2E)-4-hydroxy-3-methylbut-2-enyl diphosphate. Dimethylallyl diphosphate contacts are provided by Ser-228, Asn-230, and Ser-273. 3 residues coordinate isopentenyl diphosphate: Ser-228, Asn-230, and Ser-273.

The protein belongs to the IspH family. Requires [4Fe-4S] cluster as cofactor.

The enzyme catalyses isopentenyl diphosphate + 2 oxidized [2Fe-2S]-[ferredoxin] + H2O = (2E)-4-hydroxy-3-methylbut-2-enyl diphosphate + 2 reduced [2Fe-2S]-[ferredoxin] + 2 H(+). It carries out the reaction dimethylallyl diphosphate + 2 oxidized [2Fe-2S]-[ferredoxin] + H2O = (2E)-4-hydroxy-3-methylbut-2-enyl diphosphate + 2 reduced [2Fe-2S]-[ferredoxin] + 2 H(+). It participates in isoprenoid biosynthesis; dimethylallyl diphosphate biosynthesis; dimethylallyl diphosphate from (2E)-4-hydroxy-3-methylbutenyl diphosphate: step 1/1. It functions in the pathway isoprenoid biosynthesis; isopentenyl diphosphate biosynthesis via DXP pathway; isopentenyl diphosphate from 1-deoxy-D-xylulose 5-phosphate: step 6/6. Functionally, catalyzes the conversion of 1-hydroxy-2-methyl-2-(E)-butenyl 4-diphosphate (HMBPP) into a mixture of isopentenyl diphosphate (IPP) and dimethylallyl diphosphate (DMAPP). Acts in the terminal step of the DOXP/MEP pathway for isoprenoid precursor biosynthesis. This Macrococcus caseolyticus (strain JCSC5402) (Macrococcoides caseolyticum) protein is 4-hydroxy-3-methylbut-2-enyl diphosphate reductase.